Here is a 658-residue protein sequence, read N- to C-terminus: Katanin p80 WD40 repeat-containing subunit B1 (658 aa).

Residues 1–284 form an interaction with dynein region; that stretch reads MATPVVTKTA…VADLAICNDQ (284 aa). Residues 1–300 are interaction with centrosomes; the sequence is MATPVVTKTA…SQSNVSSYVV (300 aa). 6 WD repeats span residues 18–58, 61–100, 103–142, 145–184, 187–226, and 229–269; these read AHAS…CIMS, GHTSPVESVRLNTPEELIVAGSQSGSIRVWDLEAAKILRT, GHKANICSLDFHPYGEFVASGSQDTNIKLWDIRRKGCVFR, GHSQAVRCLRFSPDGKWLASAADDHTVKLWDLTAGKMMSE, GHTGPVNVVEFHPNEYLLASGSSDRTIRFWDLEKFQVVSC, and GEPG…DVVL. Residues 285–437 form an interaction with PAFAH1B1 region; sequence LIGVAFSQSN…LPQLPVPNLE (153 aa). Residues 311–329 show a composition bias toward polar residues; it reads VTQDPVQANQPLTQQTPNP. Disordered regions lie at residues 311 to 419 and 434 to 458; these read VTQD…EVSK and PNLEVPARPSVMTSTPAPKGEPDII. Residues 352-374 show a composition bias toward basic and acidic residues; that stretch reads HNSESERRSPSSEDDRDERESRA. Thr-395 is subject to Phosphothreonine. The interval 436–658 is interaction with KATNA1 and NDEL1; sequence LEVPARPSVM…ELHLLMASLD (223 aa).

The protein belongs to the WD repeat KATNB1 family. As to quaternary structure, interacts with KATNA1. This interaction enhances the microtubule binding and severing activity of KATNA1 and also targets this activity to the centrosome. This interaction is weakly competed by KATNBL1 which has a lower affinity for it. Interacts with ASPM; the katanin complex formation KATNA1:KATNB1 is required for the association of ASPM. Interacts with dynein, microtubules, NDEL1 and PAFAH1B1. Interacts with KATNAL1; this interaction is weakly competed by KATNBL1 which has a lower affinity for it. Interacts with CAMSAP2 and CAMSAP3; leading to regulate the length of CAMSAP-decorated microtubule stretches.

It is found in the cytoplasm. It localises to the cytoskeleton. The protein resides in the microtubule organizing center. The protein localises to the centrosome. Its subcellular location is the spindle pole. It is found in the spindle. Its function is as follows. Participates in a complex which severs microtubules in an ATP-dependent manner. May act to target the enzymatic subunit of this complex to sites of action such as the centrosome. Microtubule severing may promote rapid reorganization of cellular microtubule arrays and the release of microtubules from the centrosome following nucleation. Microtubule release from the mitotic spindle poles may allow depolymerization of the microtubule end proximal to the spindle pole, leading to poleward microtubule flux and poleward motion of chromosome. The function in regulating microtubule dynamics at spindle poles seems to depend on the association of the katanin KATNA1:KATNB1 complex with ASPM which recruits it to microtubules. Reversely KATNA1:KATNB1 can enhance ASPM blocking activity on microtubule minus-end growth. Microtubule release within the cell body of neurons may be required for their transport into neuronal processes by microtubule-dependent motor proteins. This transport is required for axonal growth. This Mus musculus (Mouse) protein is Katanin p80 WD40 repeat-containing subunit B1 (Katnb1).